We begin with the raw amino-acid sequence, 285 residues long: Protease HtpX homolog (285 aa).

The next 2 membrane-spanning stretches (helical) occupy residues 7–27 (TAML…MIGG) and 30–50 (GMTI…WFSD). His-131 contributes to the Zn(2+) binding site. Glu-132 is an active-site residue. His-135 is a Zn(2+) binding site. 2 helical membrane passes run 146–166 (ISAT…FFGG) and 177–197 (IAGI…QMAI). Residue Glu-202 coordinates Zn(2+).

The protein belongs to the peptidase M48B family. It depends on Zn(2+) as a cofactor.

The protein resides in the cell inner membrane. The protein is Protease HtpX homolog of Burkholderia mallei (strain NCTC 10247).